Here is a 324-residue protein sequence, read N- to C-terminus: Phospho-N-acetylmuramoyl-pentapeptide-transferase (324 aa).

9 consecutive transmembrane segments (helical) span residues 13–33 (VLSALLMGFAFSMVLGPIFIP), 57–77 (GTPTMGGLIFFISVSVTMLII), 85–105 (GMIVLYSLIAFGIIGFLDDIL), 121–141 (MILLLLFSIALAYYGYTNIGT), 143–163 (IIIPFMNSKLNLGIFYIPLVV), 179–199 (IDGLASSVTVIVLTFFAIVGF), 201–221 (TGHYQVGVFSIALAGALLGFL), 238–260 (LALGGAIATIALILKMPLFIIIV), and 303–323 (VKLVTVFSIITLILCIIGFIA).

This sequence belongs to the glycosyltransferase 4 family. MraY subfamily. Mg(2+) is required as a cofactor.

Its subcellular location is the cell membrane. The catalysed reaction is UDP-N-acetyl-alpha-D-muramoyl-L-alanyl-gamma-D-glutamyl-meso-2,6-diaminopimeloyl-D-alanyl-D-alanine + di-trans,octa-cis-undecaprenyl phosphate = di-trans,octa-cis-undecaprenyl diphospho-N-acetyl-alpha-D-muramoyl-L-alanyl-D-glutamyl-meso-2,6-diaminopimeloyl-D-alanyl-D-alanine + UMP. It participates in cell wall biogenesis; peptidoglycan biosynthesis. Catalyzes the initial step of the lipid cycle reactions in the biosynthesis of the cell wall peptidoglycan: transfers peptidoglycan precursor phospho-MurNAc-pentapeptide from UDP-MurNAc-pentapeptide onto the lipid carrier undecaprenyl phosphate, yielding undecaprenyl-pyrophosphoryl-MurNAc-pentapeptide, known as lipid I. The sequence is that of Phospho-N-acetylmuramoyl-pentapeptide-transferase from Clostridium botulinum (strain Eklund 17B / Type B).